We begin with the raw amino-acid sequence, 135 residues long: Large ribosomal subunit protein eL27y (135 aa).

It belongs to the eukaryotic ribosomal protein eL27 family.

In Arabidopsis thaliana (Mouse-ear cress), this protein is Large ribosomal subunit protein eL27y (RPL27B).